Reading from the N-terminus, the 172-residue chain is Large ribosomal subunit protein uL10 (172 aa).

The protein belongs to the universal ribosomal protein uL10 family. Part of the ribosomal stalk of the 50S ribosomal subunit. The N-terminus interacts with L11 and the large rRNA to form the base of the stalk. The C-terminus forms an elongated spine to which L12 dimers bind in a sequential fashion forming a multimeric L10(L12)X complex.

In terms of biological role, forms part of the ribosomal stalk, playing a central role in the interaction of the ribosome with GTP-bound translation factors. This chain is Large ribosomal subunit protein uL10, found in Prosthecochloris aestuarii (strain DSM 271 / SK 413).